Here is a 20-residue protein sequence, read N- to C-terminus: uncharacterized protein (20 aa).

This is an uncharacterized protein from Escherichia coli (strain K12).